Here is a 1095-residue protein sequence, read N- to C-terminus: Tyrosine-sulfated glycopeptide receptor 1 (1095 aa).

A helical membrane pass occupies residues proline 23–valine 43. Asparagine 62 and asparagine 73 each carry an N-linked (GlcNAc...) asparagine glycan. LRR repeat units lie at residues glutamate 91–leucine 115, glutamine 116–alanine 139, aspartate 141–asparagine 165, isoleucine 170–glutamine 195, alanine 197–alanine 221, proline 223–cysteine 246, serine 247–leucine 270, proline 271–leucine 294, threonine 295–leucine 318, lysine 320–cysteine 342, lysine 344–arginine 366, phenylalanine 367–cysteine 391, methionine 393–leucine 415, glutamate 416–glutamine 439, cysteine 441–arginine 466, phenylalanine 470–leucine 494, glutamine 495–threonine 517, leucine 518–leucine 542, and asparagine 566–lysine 589. A glycan (N-linked (GlcNAc...) asparagine) is linked at asparagine 165. Asparagine 199, asparagine 204, and asparagine 207 each carry an N-linked (GlcNAc...) asparagine glycan. A glycan (N-linked (GlcNAc...) asparagine) is linked at asparagine 258. Asparagine 341 is a glycosylation site (N-linked (GlcNAc...) asparagine). Asparagine 377 carries an N-linked (GlcNAc...) asparagine glycan. N-linked (GlcNAc...) asparagine glycosylation occurs at asparagine 430. 7 N-linked (GlcNAc...) asparagine glycosylation sites follow: asparagine 569, asparagine 592, asparagine 616, asparagine 627, asparagine 640, asparagine 662, and asparagine 714. 3 LRR repeats span residues leucine 604–leucine 628, threonine 629–leucine 652, and phenylalanine 654–threonine 677. Residues leucine 721–leucine 741 form a helical membrane-spanning segment. A phosphothreonine mark is found at threonine 792 and threonine 800. The Protein kinase domain occupies phenylalanine 803 to leucine 1074. ATP-binding positions include isoleucine 809 to valine 817 and lysine 831. 2 positions are modified to phosphotyrosine: tyrosine 876 and tyrosine 916. Catalysis depends on aspartate 929, which acts as the Proton acceptor. At tyrosine 971 the chain carries Phosphotyrosine.

The protein belongs to the protein kinase superfamily. Ser/Thr protein kinase family. Homo- and heterodimers with PSKR1. Interacts (via C-terminus) with AHA1 and AHA2 (via the R-domain). Autophosphorylated. In terms of tissue distribution, expressed ubiquitously, including in the shoot apical meristem and in the elongation zone of the root meristem.

It is found in the cell membrane. It carries out the reaction L-seryl-[protein] + ATP = O-phospho-L-seryl-[protein] + ADP + H(+). The catalysed reaction is L-threonyl-[protein] + ATP = O-phospho-L-threonyl-[protein] + ADP + H(+). Its function is as follows. Tyrosine-sulfated glycopeptide receptor with a serine/threonine-protein kinase activity. Regulates, in response to tyrosine-sulfated glycopeptide binding, a signaling cascade involved in cellular proliferation and plant growth. Not involved in PSK perception. Involved in plant immunity, with antagonistic effects on bacterial and fungal resistances. Mediates activation of the plasma membrane H(+)-ATPase by PSY1. Phosphorylates AHA2 at Thr-881. The chain is Tyrosine-sulfated glycopeptide receptor 1 from Arabidopsis thaliana (Mouse-ear cress).